The sequence spans 179 residues: NADH-quinone oxidoreductase subunit I (179 aa).

4Fe-4S ferredoxin-type domains follow at residues 49–79 and 89–118; these read LTRD…LQKG and EFFR…LTPD. The [4Fe-4S] cluster site is built by C59, C62, C65, C69, C98, C101, C104, and C108.

It belongs to the complex I 23 kDa subunit family. NDH-1 is composed of 14 different subunits. Subunits NuoA, H, J, K, L, M, N constitute the membrane sector of the complex. [4Fe-4S] cluster serves as cofactor.

The protein resides in the cell inner membrane. It carries out the reaction a quinone + NADH + 5 H(+)(in) = a quinol + NAD(+) + 4 H(+)(out). Functionally, NDH-1 shuttles electrons from NADH, via FMN and iron-sulfur (Fe-S) centers, to quinones in the respiratory chain. The immediate electron acceptor for the enzyme in this species is believed to be ubiquinone. Couples the redox reaction to proton translocation (for every two electrons transferred, four hydrogen ions are translocated across the cytoplasmic membrane), and thus conserves the redox energy in a proton gradient. This is NADH-quinone oxidoreductase subunit I from Chromohalobacter salexigens (strain ATCC BAA-138 / DSM 3043 / CIP 106854 / NCIMB 13768 / 1H11).